We begin with the raw amino-acid sequence, 173 residues long: NADH-ubiquinone oxidoreductase chain 6 (173 aa).

5 helical membrane-spanning segments follow: residues 1–21, 27–47, 48–68, 91–111, and 139–159; these read MTYF…AVAS, YGVV…LSLG, VSFV…VVFV, GVSF…IGCL, and CGVG…FVVL.

This sequence belongs to the complex I subunit 6 family.

Its subcellular location is the mitochondrion membrane. It catalyses the reaction a ubiquinone + NADH + 5 H(+)(in) = a ubiquinol + NAD(+) + 4 H(+)(out). Core subunit of the mitochondrial membrane respiratory chain NADH dehydrogenase (Complex I) that is believed to belong to the minimal assembly required for catalysis. Complex I functions in the transfer of electrons from NADH to the respiratory chain. The immediate electron acceptor for the enzyme is believed to be ubiquinone. The chain is NADH-ubiquinone oxidoreductase chain 6 (MT-ND6) from Fratercula cirrhata (Tufted puffin).